Here is a 206-residue protein sequence, read N- to C-terminus: N-(5'-phosphoribosyl)anthranilate isomerase (206 aa).

It belongs to the TrpF family.

It carries out the reaction N-(5-phospho-beta-D-ribosyl)anthranilate = 1-(2-carboxyphenylamino)-1-deoxy-D-ribulose 5-phosphate. The protein operates within amino-acid biosynthesis; L-tryptophan biosynthesis; L-tryptophan from chorismate: step 3/5. In Rubrobacter xylanophilus (strain DSM 9941 / JCM 11954 / NBRC 16129 / PRD-1), this protein is N-(5'-phosphoribosyl)anthranilate isomerase.